The following is a 283-amino-acid chain: Undecaprenyl-diphosphatase (283 aa).

Transmembrane regions (helical) follow at residues 1–21, 40–60, 85–105, 117–137, 196–216, 232–252, and 258–278; these read MDII…FLPI, GAAF…IYFY, SRMG…GLLF, YIIS…EYLV, FSFL…LLKV, VATV…LDYL, and YLFI…LSMG.

This sequence belongs to the UppP family.

Its subcellular location is the cell inner membrane. It carries out the reaction di-trans,octa-cis-undecaprenyl diphosphate + H2O = di-trans,octa-cis-undecaprenyl phosphate + phosphate + H(+). In terms of biological role, catalyzes the dephosphorylation of undecaprenyl diphosphate (UPP). Confers resistance to bacitracin. The protein is Undecaprenyl-diphosphatase of Chloroherpeton thalassium (strain ATCC 35110 / GB-78).